A 160-amino-acid polypeptide reads, in one-letter code: S-adenosylmethionine decarboxylase proenzyme (160 aa).

The active-site Schiff-base intermediate with substrate; via pyruvic acid is S73. S73 is subject to Pyruvic acid (Ser); by autocatalysis. H78 (proton acceptor; for processing activity) is an active-site residue. The active-site Proton donor; for catalytic activity is the C93.

It belongs to the prokaryotic AdoMetDC family. Type 1 subfamily. In terms of assembly, heterotetramer of two alpha and two beta chains arranged as a dimer of alpha/beta heterodimers. Pyruvate serves as cofactor. Is synthesized initially as an inactive proenzyme. Formation of the active enzyme involves a self-maturation process in which the active site pyruvoyl group is generated from an internal serine residue via an autocatalytic post-translational modification. Two non-identical subunits are generated from the proenzyme in this reaction, and the pyruvate is formed at the N-terminus of the alpha chain, which is derived from the carboxyl end of the proenzyme. The post-translation cleavage follows an unusual pathway, termed non-hydrolytic serinolysis, in which the side chain hydroxyl group of the serine supplies its oxygen atom to form the C-terminus of the beta chain, while the remainder of the serine residue undergoes an oxidative deamination to produce ammonia and the pyruvoyl group blocking the N-terminus of the alpha chain.

It catalyses the reaction S-adenosyl-L-methionine + H(+) = S-adenosyl 3-(methylsulfanyl)propylamine + CO2. It functions in the pathway amine and polyamine biosynthesis; S-adenosylmethioninamine biosynthesis; S-adenosylmethioninamine from S-adenosyl-L-methionine: step 1/1. In terms of biological role, catalyzes the decarboxylation of S-adenosylmethionine to S-adenosylmethioninamine (dcAdoMet), the propylamine donor required for the synthesis of the polyamines spermine and spermidine from the diamine putrescine. This is S-adenosylmethionine decarboxylase proenzyme from Pseudomonas paraeruginosa (strain DSM 24068 / PA7) (Pseudomonas aeruginosa (strain PA7)).